The sequence spans 476 residues: Flavin-dependent halogenase otaD (476 aa).

Positions 14 and 17 each coordinate FAD. Chloride is bound by residues Ser-304 and Gly-305. Val-306 contributes to the FAD binding site.

Belongs to the flavin-dependent halogenase family.

It carries out the reaction ochratoxin B + FADH2 + chloride + O2 = ochratoxin A + FAD + 2 H2O. Its pathway is mycotoxin biosynthesis. Flavin-dependent halogenase; part of the gene cluster that mediates the biosynthesis of ochratoxin A (OTA), a mycotoxin composed of a chlorinated type I polyketide dihydroisocoumarin moiety linked to L-phenylalanine, and demonstrated to have nephrotoxic, immunotoxic, genotoxic, neurotoxic, and teratogenic properties. OtaD chlorinates ochratoxin B (OTB) at the C-5 position to form OTA. The pathway begins with the highly reducing polyketide synthase otaA that catalyzes the formation of the isocoumarin group during the initial stages of biosynthesis, starting from one acetate and 4 malonate units, to originate the characteristic pentaketide skeleton 7-methylmellein (7-MM) of the OTA molecule. The newly identified cyclase otaY might be involved in the polyketide cyclization reaction during the initial steps of the OTA biosynthesis. 7-MM is then oxidized into 7-carboxymellein (also called ochratoxin beta) by the cytochrome P450 monooxygenase otaC. The NRPS encoded by the otaB gene is involved in the linking of phenylalanine to the dihydroisocoumarin ring. The reaction catalyzed by NRPS results in the production of ochratoxin B (OTB), which is the non-chlorinated analog of OTA and which subsequently serves as the substrate of the halogenase otaD for chlorination activity to form the final molecular structure of OTA, containing a chlorine atom in the C-5 position of the molecule. The chain is Flavin-dependent halogenase otaD from Aspergillus niger (strain ATCC MYA-4892 / CBS 513.88 / FGSC A1513).